Reading from the N-terminus, the 1416-residue chain is DNA-directed RNA polymerase subunit beta' (1416 aa).

Residues Cys71, Cys73, Cys86, and Cys89 each contribute to the Zn(2+) site. Mg(2+) is bound by residues Asp461, Asp463, and Asp465. Cys815, Cys889, Cys896, and Cys899 together coordinate Zn(2+).

The protein belongs to the RNA polymerase beta' chain family. The RNAP catalytic core consists of 2 alpha, 1 beta, 1 beta' and 1 omega subunit. When a sigma factor is associated with the core the holoenzyme is formed, which can initiate transcription. Mg(2+) is required as a cofactor. Zn(2+) serves as cofactor.

The catalysed reaction is RNA(n) + a ribonucleoside 5'-triphosphate = RNA(n+1) + diphosphate. Functionally, DNA-dependent RNA polymerase catalyzes the transcription of DNA into RNA using the four ribonucleoside triphosphates as substrates. The sequence is that of DNA-directed RNA polymerase subunit beta' from Haemophilus influenzae (strain 86-028NP).